Consider the following 266-residue polypeptide: Glucosamine-6-phosphate deaminase (266 aa).

The Proton acceptor; for enolization step role is filled by Asp72. Residue Asp141 is the For ring-opening step of the active site. The active-site Proton acceptor; for ring-opening step is His143. The For ring-opening step role is filled by Glu148.

It belongs to the glucosamine/galactosamine-6-phosphate isomerase family. NagB subfamily. Homohexamer; trimer of disulfide-linked dimers.

The catalysed reaction is alpha-D-glucosamine 6-phosphate + H2O = beta-D-fructose 6-phosphate + NH4(+). It participates in amino-sugar metabolism; N-acetylneuraminate degradation; D-fructose 6-phosphate from N-acetylneuraminate: step 5/5. With respect to regulation, allosterically activated by N-acetylglucosamine 6-phosphate (GlcNAc6P). Functionally, catalyzes the reversible isomerization-deamination of glucosamine 6-phosphate (GlcN6P) to form fructose 6-phosphate (Fru6P) and ammonium ion. The polypeptide is Glucosamine-6-phosphate deaminase (Escherichia coli O6:H1 (strain CFT073 / ATCC 700928 / UPEC)).